Here is a 166-residue protein sequence, read N- to C-terminus: Small ribosomal subunit protein uS9 (166 aa).

Residues lysine 135–arginine 166 are disordered. Residues arginine 142–lysine 151 show a composition bias toward basic and acidic residues. Over residues tyrosine 152 to arginine 166 the composition is skewed to basic residues.

This sequence belongs to the universal ribosomal protein uS9 family.

This Mycobacterium avium (strain 104) protein is Small ribosomal subunit protein uS9.